Consider the following 509-residue polypeptide: Maturase K (509 aa).

The protein belongs to the intron maturase 2 family. MatK subfamily.

The protein resides in the plastid. The protein localises to the chloroplast. Functionally, usually encoded in the trnK tRNA gene intron. Probably assists in splicing its own and other chloroplast group II introns. This Sequoia sempervirens (California redwood) protein is Maturase K.